A 350-amino-acid polypeptide reads, in one-letter code: Probable dual-specificity RNA methyltransferase RlmN (350 aa).

In terms of domain architecture, Radical SAM core spans 105–342; that stretch reads ANGKNSVCIS…VRQSKGANIN (238 aa). Residues Cys112 and Cys345 are joined by a disulfide bond. [4Fe-4S] cluster is bound by residues Cys119, Cys123, and Cys126. S-adenosyl-L-methionine contacts are provided by residues 166 to 167, Ser198, 221 to 223, and Asn302; these read GE and SLH. Catalysis depends on Cys345, which acts as the S-methylcysteine intermediate.

The protein belongs to the radical SAM superfamily. RlmN family. [4Fe-4S] cluster serves as cofactor.

The protein resides in the cytoplasm. The catalysed reaction is adenosine(2503) in 23S rRNA + 2 reduced [2Fe-2S]-[ferredoxin] + 2 S-adenosyl-L-methionine = 2-methyladenosine(2503) in 23S rRNA + 5'-deoxyadenosine + L-methionine + 2 oxidized [2Fe-2S]-[ferredoxin] + S-adenosyl-L-homocysteine. It catalyses the reaction adenosine(37) in tRNA + 2 reduced [2Fe-2S]-[ferredoxin] + 2 S-adenosyl-L-methionine = 2-methyladenosine(37) in tRNA + 5'-deoxyadenosine + L-methionine + 2 oxidized [2Fe-2S]-[ferredoxin] + S-adenosyl-L-homocysteine. Its function is as follows. Specifically methylates position 2 of adenine 2503 in 23S rRNA and position 2 of adenine 37 in tRNAs. This chain is Probable dual-specificity RNA methyltransferase RlmN, found in Endomicrobium trichonymphae.